A 154-amino-acid chain; its full sequence is Nuclear cap-binding protein subunit 2 (154 aa).

MRNA-binding positions include tyrosine 10, tyrosine 33, 102–106 (RVDWD), 113–117 (RQYGR), and 123–124 (QV). The 79-residue stretch at 30 to 108 (CTLYVGNLSF…RLIRVDWDAG (79 aa)) folds into the RRM domain.

The protein belongs to the RRM NCBP2 family. Component of the nuclear cap-binding complex (CBC), a heterodimer composed of Cbp80 and Cbp20 that interacts with m7GpppG-capped RNA. Interacts with Ars2.

The protein localises to the nucleus. Functionally, component of the cap-binding complex (CBC), which binds co-transcriptionally to the 5' cap of pre-mRNAs and is involved in various processes such as pre-mRNA splicing and RNA-mediated gene silencing (RNAi). The CBC complex is involved in miRNA-mediated RNA interference via its interaction with Ars2 and is required for primary microRNAs (miRNAs) processing. Also involved in innate immunity via the short interfering RNAs (siRNAs) processing machinery by restricting the viral RNA production. In the CBC complex, Cbp20 recognizes and binds capped RNAs (m7GpppG-capped RNA) but requires Cbp80 to stabilize the movement of its N-terminal loop and lock the CBC into a high affinity cap-binding state with the cap structure. This chain is Nuclear cap-binding protein subunit 2 (Cbp20), found in Drosophila yakuba (Fruit fly).